The sequence spans 352 residues: Divinyl chlorophyll a/b light-harvesting protein PcbA (352 aa).

6 consecutive transmembrane segments (helical) span residues 27–47 (FIAA…AFTL), 90–110 (VLAI…GGLL), 142–162 (FILG…VEWA), 203–223 (VMGG…WHIA), 243–263 (AVLS…AFWS), and 306–326 (LANV…WHAL).

The protein belongs to the PsbB/PsbC family. IsiA/Pcb subfamily. In terms of assembly, the antenna complex consists of divinyl chlorophylls (a and b) and divinyl chlorophyll a/b binding proteins and binds less divinyl chlorophyll b than does low-light-adapted Prochlorococcus. Also forms complexes with PSII, consisting of a PSII dimer and 4 or 8 PcbA subunits. These complexes are also found under conditions of iron-starvation. Divinyl chlorophyll a is required as a cofactor. Requires divinyl chlorophyll b as cofactor.

It localises to the cellular thylakoid membrane. In terms of biological role, the antenna complex functions as a light receptor, it captures and delivers excitation energy to photosystem II and possibly to photosystem I. The Prochlorales pcb genes are not related to higher plant LHCs. In Prochlorococcus marinus subsp. pastoris (strain CCMP1986 / NIES-2087 / MED4), this protein is Divinyl chlorophyll a/b light-harvesting protein PcbA (pcbA).